Reading from the N-terminus, the 853-residue chain is DNA mismatch repair protein MutS (853 aa).

614–621 (GPNMGGKS) serves as a coordination point for ATP.

Belongs to the DNA mismatch repair MutS family.

In terms of biological role, this protein is involved in the repair of mismatches in DNA. It is possible that it carries out the mismatch recognition step. This protein has a weak ATPase activity. This Enterobacter sp. (strain 638) protein is DNA mismatch repair protein MutS.